Consider the following 254-residue polypeptide: Alcohol dehydrogenase (254 aa).

10 to 33 lines the NAD(+) pocket; sequence FVAGLGGIGLDTSREIVKSGPKNL. Ser138 contributes to the substrate binding site. Tyr151 serves as the catalytic Proton acceptor.

The protein belongs to the short-chain dehydrogenases/reductases (SDR) family. Homodimer.

The catalysed reaction is a primary alcohol + NAD(+) = an aldehyde + NADH + H(+). The enzyme catalyses a secondary alcohol + NAD(+) = a ketone + NADH + H(+). The chain is Alcohol dehydrogenase (Adh) from Drosophila planitibia (Fruit fly).